The primary structure comprises 633 residues: Keratin, type II cytoskeletal 2 epidermal (633 aa).

A head region spans residues 1–189; that stretch reads MSCQISCKSR…DPEIQNVKSQ (189 aa). Arginine 18 carries the post-translational modification Asymmetric dimethylarginine. 3 positions are modified to phosphoserine: serine 21, serine 24, and serine 60. Positions 190–225 are coil 1A; the sequence is EREQIKTLNNKFASFIDKVRFLEQQNQVLQTKWELL. One can recognise an IF rod domain in the interval 190–503; it reads EREQIKTLNN…KLLEGEECRM (314 aa). Residues 226 to 244 are linker 1; sequence QQLDVSTRTTNLEPIFQAY. Residues 245-336 form a coil 1B region; it reads IAKLKKYVDT…FLFDXELSQM (92 aa). Residues 337–360 form a linker 12 region; that stretch reads QTQISETNVTLSMDNNRSLDLDSI. The tract at residues 361-499 is coil 2; the sequence is ISEVKAQYEE…ATYRKLLEGE (139 aa). Residues 500–633 form a tail region; the sequence is ECRMSGDLSS…SGSSVTFSFR (134 aa). The span at 518-527 shows a compositional bias: low complexity; it reads SSMSSSMTSR. Residues 518–633 form a disordered region; that stretch reads SSMSSSMTSR…SGSSVTFSFR (116 aa). Over residues 528-613 the composition is skewed to gly residues; that stretch reads GGFGGYGSGG…GYGSGGGSRG (86 aa). Omega-N-methylarginine occurs at positions 588 and 612.

It belongs to the intermediate filament family. Heterotetramer of two type I and two type II keratins. Associates with KRT10.

It is found in the cytoplasm. In terms of biological role, probably contributes to terminal cornification. Associated with keratinocyte activation, proliferation and keratinization. Required for maintenance of corneocytes and keratin filaments in suprabasal keratinocytes in the epidermis of the ear, potentially via moderation of expression and localization of keratins and their partner proteins. Plays a role in the establishment of the epidermal barrier on plantar skin. In Canis lupus familiaris (Dog), this protein is Keratin, type II cytoskeletal 2 epidermal (KRT2).